The chain runs to 244 residues: Lymphotoxin-beta (244 aa).

At 1-18 the chain is on the cytoplasmic side; sequence MGALGLEGRGGRLQGRGS. Residues 19 to 48 traverse the membrane as a helical; Signal-anchor for type II membrane protein segment; sequence LLLAVAGATSLVTLLLAVPITVLAVLALVP. The Extracellular portion of the chain corresponds to 49–244; sequence QDQGGLVTET…KTFFGAVMVG (196 aa). The THD domain occupies 88 to 243; it reads PAAHLIGAPL…GKTFFGAVMV (156 aa). The N-linked (GlcNAc...) asparagine glycan is linked to asparagine 222.

Belongs to the tumor necrosis factor family. Heterotrimer of either two LTB and one LTA subunits or (less prevalent) two LTA and one LTB subunits.

Its subcellular location is the membrane. Functionally, cytokine that binds to LTBR/TNFRSF3. May play a specific role in immune response regulation. Provides the membrane anchor for the attachment of the heterotrimeric complex to the cell surface. The polypeptide is Lymphotoxin-beta (LTB) (Pan troglodytes (Chimpanzee)).